We begin with the raw amino-acid sequence, 539 residues long: Chaperonin GroEL (539 aa).

Residues 29–32 (TLGP), 86–90 (DGTTT), Gly-413, 479–481 (DAL), and Asp-495 each bind ATP.

Belongs to the chaperonin (HSP60) family. Forms a cylinder of 14 subunits composed of two heptameric rings stacked back-to-back. Interacts with the co-chaperonin GroES.

It is found in the cytoplasm. The enzyme catalyses ATP + H2O + a folded polypeptide = ADP + phosphate + an unfolded polypeptide.. In terms of biological role, together with its co-chaperonin GroES, plays an essential role in assisting protein folding. The GroEL-GroES system forms a nano-cage that allows encapsulation of the non-native substrate proteins and provides a physical environment optimized to promote and accelerate protein folding. The protein is Chaperonin GroEL of Thermosipho africanus (strain TCF52B).